Here is a 371-residue protein sequence, read N- to C-terminus: Leucine-rich repeat-containing protein 58 (371 aa).

The residue at position 24 (Ser24) is a Phosphoserine. LRR repeat units lie at residues 45–66 (ALLRLLLPHNRLVSLPRALGSG), 69–91 (HLQLLDVSGNALTALGPELLALR), 92–113 (GLRTLLAKNNRLGGPSALPKGL), 121–143 (SLQVLNLSGNCFQEVPASLLELR), 144–166 (ALQTLSLGGNQLQSIPAEIENLQ), 167–189 (SLECLYLGGNFIKEIPPELGNLP), 190–211 (SLNYLVLCDNKIQSIPPQLSQL), 213–234 (SLRSLSLHNNLLTYLPREILNL), and 236–256 (HLEELSLRGNPLVVRFVRDLT). A compositionally biased stretch (low complexity) spans 340–351 (SSASHSSTSQSE). Positions 340–361 (SSASHSSTSQSESDSEDEASVA) are disordered.

This Homo sapiens (Human) protein is Leucine-rich repeat-containing protein 58 (LRRC58).